A 145-amino-acid chain; its full sequence is MASLMRKAAVAPAKATRTTVKASASLQRVAQAAGVAVAGFSLALSANAANVKLGADSGALVFEPATVTIKAGDSVTWTNNAGFPHNIVFDEDAVPAGVNADALSHDDYLNAPGESYTAKFDTAGEYGYFCEPHQGAGMVGKVIVQ.

The transit peptide at 1 to 48 (MASLMRKAAVAPAKATRTTVKASASLQRVAQAAGVAVAGFSLALSANA) directs the protein to the chloroplast. One can recognise a Plastocyanin-like domain in the interval 49–145 (ANVKLGADSG…AGMVGKVIVQ (97 aa)). Cu cation is bound by residues histidine 85, cysteine 130, histidine 133, and methionine 138.

This sequence belongs to the plastocyanin family. It depends on Cu(2+) as a cofactor.

It is found in the plastid. Its subcellular location is the chloroplast thylakoid membrane. Its function is as follows. Participates in electron transfer between P700 and the cytochrome b6-f complex in photosystem I. The chain is Plastocyanin, chloroplastic (PETE) from Tetradesmus obliquus (Green alga).